Here is a 144-residue protein sequence, read N- to C-terminus: Large ribosomal subunit protein uL15 (144 aa).

Residues 1–53 are disordered; the sequence is MRLNTLSPAEGAKHAPKRVGRGIGSGLGKTAGRGHKGQNSRSGGGVRRGFEGG. Positions 21–31 are enriched in gly residues; sequence RGIGSGLGKTA.

It belongs to the universal ribosomal protein uL15 family. In terms of assembly, part of the 50S ribosomal subunit.

Functionally, binds to the 23S rRNA. The protein is Large ribosomal subunit protein uL15 of Serratia proteamaculans (strain 568).